Consider the following 198-residue polypeptide: Formate-dependent nitrite reductase complex subunit NrfG (198 aa).

TPR repeat units follow at residues 73–106 and 144–177; these read SEQW…RGEN and ITAL…NSPR.

In terms of biological role, required for formate-dependent nitrite reduction. Not required for the biosynthesis of any of the c-type cytochromes nor for the secretion of the periplasmic cytochromes. This Escherichia coli O157:H7 protein is Formate-dependent nitrite reductase complex subunit NrfG (nrfG).